The sequence spans 701 residues: Glycine--tRNA ligase beta subunit (701 aa).

The protein belongs to the class-II aminoacyl-tRNA synthetase family. Tetramer of two alpha and two beta subunits.

The protein resides in the cytoplasm. It catalyses the reaction tRNA(Gly) + glycine + ATP = glycyl-tRNA(Gly) + AMP + diphosphate. This chain is Glycine--tRNA ligase beta subunit, found in Anaeromyxobacter sp. (strain K).